The sequence spans 138 residues: Ribosome-binding factor A (138 aa).

This sequence belongs to the RbfA family. As to quaternary structure, monomer. Binds 30S ribosomal subunits, but not 50S ribosomal subunits or 70S ribosomes.

It localises to the cytoplasm. One of several proteins that assist in the late maturation steps of the functional core of the 30S ribosomal subunit. Associates with free 30S ribosomal subunits (but not with 30S subunits that are part of 70S ribosomes or polysomes). Required for efficient processing of 16S rRNA. May interact with the 5'-terminal helix region of 16S rRNA. This is Ribosome-binding factor A from Chromobacterium violaceum (strain ATCC 12472 / DSM 30191 / JCM 1249 / CCUG 213 / NBRC 12614 / NCIMB 9131 / NCTC 9757 / MK).